The chain runs to 280 residues: Tryptophan 2,3-dioxygenase (280 aa).

Residues 49-53 (FIIIH), Tyr-111, and Arg-115 contribute to the substrate site. His-238 is a binding site for heme. Thr-252 contacts substrate.

It belongs to the tryptophan 2,3-dioxygenase family. In terms of assembly, homotetramer. It depends on heme as a cofactor.

It catalyses the reaction L-tryptophan + O2 = N-formyl-L-kynurenine. It participates in amino-acid degradation; L-tryptophan degradation via kynurenine pathway; L-kynurenine from L-tryptophan: step 1/2. Functionally, heme-dependent dioxygenase that catalyzes the oxidative cleavage of the L-tryptophan (L-Trp) pyrrole ring and converts L-tryptophan to N-formyl-L-kynurenine. Catalyzes the oxidative cleavage of the indole moiety. This chain is Tryptophan 2,3-dioxygenase, found in Geobacillus thermodenitrificans (strain NG80-2).